Here is a 267-residue protein sequence, read N- to C-terminus: C-type lectin domain family 12 member A (267 aa).

The Cytoplasmic portion of the chain corresponds to 1-43; that stretch reads MSEEIVYANLKIQDPDKKEETQKSDKCGGKVSADASHSQQKTV. The ITIM motif motif lies at 5-10; it reads IVYANL. Phosphotyrosine is present on Y7. A helical; Signal-anchor for type II membrane protein membrane pass occupies residues 44 to 64; it reads LILILLCLLLFIGMGVLGGIF. Residues 65-267 are Extracellular-facing; it reads YTTLATEMIK…VLNGLPEDSR (203 aa). N98 and N105 each carry an N-linked (GlcNAc...) asparagine glycan. Intrachain disulfides connect C118/C130, C133/C144, C161/C246, and C225/C238. The C-type lectin domain maps to 140 to 247; it reads YKDSCYSQLN…CTDENNIICE (108 aa). The N-linked (GlcNAc...) asparagine glycan is linked to N165.

In terms of assembly, homodimer; disulfide-linked. Interacts (when the ITIM motif is phosphorylated) with PTPN6 and PTPN11. Post-translationally, phosphorylated at Tyr-7 by SRC in the ITIM motif following ligand-binding, promoting recruitment of tyrosine-protein phosphatases PTPN6 and PTPN11. Mainly expressed in lymphoid tissues. Preferentially expressed in peripheral blood leukocytes; less frequent in thymus, spleen, heart, brain and lung; and undetectable in other tissues.

The protein localises to the cell membrane. Myeloid inhibitory C-type lectin receptor that acts as a negative regulator of myeloid cell activation. Myeloid cell inhibition is required to limit proinflammatory pathways and protect against excessive inflammation. Specifically recognizes and binds various structures, such as neutrophil extracellular traps (NETs) or monosodium urate crystals. Also acts as a pattern-recognition receptor for pathogen-associated molecules, such as plasmodium hemozoin or mycobacterial micolic acid. Ligand-binding induces phosphorylation of its ITIM motif, followed by recruitment of tyrosine-protein phosphatases PTPN6 and PTPN11, which counteract tyrosine-protein kinase SYK, thereby preventing myeloid cell activation. Acts as a pattern-recognition receptor for NETs in neutrophils: specifically recognizes DNA in NETs, leading to inhibit neutrophil activation and limit further NET formation. This regulation is essential for controlling key neutrophil responses and limit NET-mediated inflammatory conditions. Also recognizes dead cells by acting as a receptor for monosodium urate crystals, leading to down-regulate neutrophil activation. Binding to monosodium urate crystals also promotes the type I interferon response. Acts as an inhibitor of natural killer (NK) cell cytotoxicity. Also acts as an ihibitor of dendritic cell maturation in an IL10-dependent manner. The polypeptide is C-type lectin domain family 12 member A (Mus musculus (Mouse)).